Consider the following 682-residue polypeptide: Potassium-transporting ATPase ATP-binding subunit (682 aa).

4 helical membrane-spanning segments follow: residues 34–54 (PVMF…IAMA), 62–82 (ALFS…ANFA), 219–239 (IALT…TATL), and 254–274 (VLVA…LSAI). Aspartate 307 functions as the 4-aspartylphosphate intermediate in the catalytic mechanism. ATP contacts are provided by residues aspartate 344, glutamate 348, 377-384 (FTAQSRMS), and lysine 395. Mg(2+) contacts are provided by aspartate 518 and aspartate 522. The next 3 membrane-spanning stretches (helical) occupy residues 588–608 (FAII…LNIM), 616–636 (AILS…PLAL), and 656–676 (IYGL…DLLL).

Belongs to the cation transport ATPase (P-type) (TC 3.A.3) family. Type IA subfamily. The system is composed of three essential subunits: KdpA, KdpB and KdpC.

The protein resides in the cell inner membrane. It carries out the reaction K(+)(out) + ATP + H2O = K(+)(in) + ADP + phosphate + H(+). Its function is as follows. Part of the high-affinity ATP-driven potassium transport (or Kdp) system, which catalyzes the hydrolysis of ATP coupled with the electrogenic transport of potassium into the cytoplasm. This subunit is responsible for energy coupling to the transport system and for the release of the potassium ions to the cytoplasm. The sequence is that of Potassium-transporting ATPase ATP-binding subunit from Escherichia coli (strain K12 / MC4100 / BW2952).